The following is a 437-amino-acid chain: Anhydromevalonate phosphate decarboxylase (437 aa).

Residues asparagine 136 and glutamate 199 each coordinate Mn(2+). Aspartate 247 acts as the Proton acceptor in catalysis.

This sequence belongs to the UbiD family. The cofactor is prenylated FMN. It depends on Mn(2+) as a cofactor.

The catalysed reaction is (2E)-3-methyl-5-phosphooxypent-2-enoate + H(+) = isopentenyl phosphate + CO2. The protein operates within isoprenoid biosynthesis; isopentenyl diphosphate biosynthesis via mevalonate pathway. Catalyzes the conversion of trans-anhydromevalonate 5-phosphate (tAHMP) into isopentenyl phosphate. Involved in the archaeal mevalonate (MVA) pathway, which provides fundamental precursors for isoprenoid biosynthesis, such as isopentenyl diphosphate (IPP) and dimethylallyl diphosphate (DMAPP). The protein is Anhydromevalonate phosphate decarboxylase of Aeropyrum pernix (strain ATCC 700893 / DSM 11879 / JCM 9820 / NBRC 100138 / K1).